The chain runs to 88 residues: Small cysteine-rich outer membrane protein OmcA (88 aa).

Residues Met1–Ser18 form the signal peptide. Cys19 carries N-palmitoyl cysteine lipidation. A lipid anchor (S-diacylglycerol cysteine) is attached at Cys19. A disordered region spans residues Thr67–Gln88.

In terms of assembly, part of a disulfide cross-linked outer membrane complex (COMC) composed of the major outer membrane porin (MOMP), the small cysteine-rich protein (OmcA) and the large cysteine-rich periplasmic protein (OmcB).

It is found in the cell outer membrane. Functionally, in elementary bodies (EBs, the infectious stage, which is able to survive outside the host cell) provides the structural integrity of the outer envelope through disulfide cross-links with the large cysteine-rich periplasmic protein and the major outer membrane porin. It has been described in publications as the Sarkosyl-insoluble COMC (Chlamydia outer membrane complex), and serves as the functional equivalent of peptidoglycan. The polypeptide is Small cysteine-rich outer membrane protein OmcA (omcA) (Chlamydia trachomatis serovar L2 (strain ATCC VR-902B / DSM 19102 / 434/Bu)).